A 369-amino-acid chain; its full sequence is MTDLTQLQAGLIGRIEAAADVAALEAIRVEALGKSGSISEMLKGLGKMSPDERREQGPKINGLRDAVATAIAEKKAALEAAELDRKLAAERVDLTLPPPPERRGRVHPTMQVLDEMIAVFAEMGFGLAEGPDIEDDFHNFTALNFPPKHPAREMHDTFWLPQNEAGERKLLRTHTSPVQVRVMRGTNEKLPAWIANGQAPPIRVIVPGRVYRSDSDATHTPMFHQLEGLVIDRNIHMGHLKWTLETFTRRFFEAEGVVTRFRPHHFPFTEPSCEMDVQCDRSGGSVKIGQGSDWLEILGGGMVHPNVLRNCGLDPDEWQGFAFGLGVDRLGMLKYGMPDLRDMFGSDVRWLEHWGFSAFQAPNPATGLS.

Mg(2+) is bound at residue E270.

Belongs to the class-II aminoacyl-tRNA synthetase family. Phe-tRNA synthetase alpha subunit type 1 subfamily. In terms of assembly, tetramer of two alpha and two beta subunits. The cofactor is Mg(2+).

It is found in the cytoplasm. It catalyses the reaction tRNA(Phe) + L-phenylalanine + ATP = L-phenylalanyl-tRNA(Phe) + AMP + diphosphate + H(+). The polypeptide is Phenylalanine--tRNA ligase alpha subunit (Phenylobacterium zucineum (strain HLK1)).